A 438-amino-acid chain; its full sequence is Trigger factor (438 aa).

Residues 160 to 245 (DDKVVIDFVG…VKKIQEAQLP (86 aa)) form the PPIase FKBP-type domain.

Belongs to the FKBP-type PPIase family. Tig subfamily.

It is found in the cytoplasm. The enzyme catalyses [protein]-peptidylproline (omega=180) = [protein]-peptidylproline (omega=0). Its function is as follows. Involved in protein export. Acts as a chaperone by maintaining the newly synthesized protein in an open conformation. Functions as a peptidyl-prolyl cis-trans isomerase. The polypeptide is Trigger factor (Francisella philomiragia subsp. philomiragia (strain ATCC 25017 / CCUG 19701 / FSC 153 / O#319-036)).